Reading from the N-terminus, the 109-residue chain is Protein ELF4-LIKE 3 (109 aa).

The disordered stretch occupies residues 88–109 (SMEASSEGDSSEGRGNRRIRPA).

Belongs to the EARLY FLOWERING 4 family. Homodimer.

It localises to the nucleus. In terms of biological role, component of the central CCA1/LHY-TOC1 feedback loop in the circadian clock that promotes clock accuracy and is required for sustained rhythms in the absence of daily light/dark cycles. This Arabidopsis thaliana (Mouse-ear cress) protein is Protein ELF4-LIKE 3 (EFL3).